The primary structure comprises 471 residues: Tryptophan--tRNA ligase, cytoplasmic (471 aa).

A WHEP-TRS domain is found at 8-64; the sequence is SLLELFNSIATQGELVRSLKAGNASKDEIDSAVKMLVSLKMSYKAAAGEDYKADCPP. The tract at residues 59 to 79 is disordered; the sequence is KADCPPGNPAPTSNHGPDATE. Lys-154 bears the N6-succinyllysine mark. The 'HIGH' region motif lies at 164–173; the sequence is PSSEAMHVGH. A 'KMSKS' region motif is present at residues 349–353; sequence KMSAS. Ser-351 bears the Phosphoserine mark.

This sequence belongs to the class-I aminoacyl-tRNA synthetase family. As to quaternary structure, homodimer. Interacts with an oxidized form of GAPDH. GAPDH stimulates the aminoacylation activity of isoform 2. In terms of processing, proteolytic cleavage generates 2 forms; T1-TrpRS and T2-TrpRS.

The protein resides in the cytoplasm. The catalysed reaction is tRNA(Trp) + L-tryptophan + ATP = L-tryptophyl-tRNA(Trp) + AMP + diphosphate + H(+). Catalyzes the attachment of tryptophan to tRNA(Trp) in a two-step reaction: tryptophan is first activated by ATP to form Trp-AMP and then transferred to the acceptor end of the tRNA(Trp). Functionally, has no angiostatic activity. In terms of biological role, possesses an angiostatic activity but has no aminoacylation activity. Inhibits fluid shear stress-activated responses of endothelial cells. Regulates ERK, Akt, and eNOS activation pathways that are associated with angiogenesis, cytoskeletal reorganization and shear stress-responsive gene expression. Its function is as follows. Has an angiostatic activity. The chain is Tryptophan--tRNA ligase, cytoplasmic from Homo sapiens (Human).